We begin with the raw amino-acid sequence, 213 residues long: MSRVLVPCHVKGSVALQVGDVRTSQGRPGVLVIDVTFPSVAPFELQEITFKNYYTAFLSIRVRQYTSAHTPAKWVTCLRDYCLMPDPHSEEGAQEYVSLFKHQMLCDMARISELRLILRQPSPLWLSFTVEELQIYQQGPKSPSVTFPKWLSHPVPCEQPALLREGLPDPSRVSSEVQQMWALTEMIRASHTSARIGRFDVDGCYDLNLLSYT.

In terms of assembly, part of the neuronal tubulin polyglutamylase complex which contains TPGS1, TPGS2, TTLL1, LRRC49 and NICN1. High expression level is found in brain, testis, liver and kidney. Weak expression in spleen, leukocytes, small intestine and colon.

The protein localises to the nucleus. The polypeptide is Nicolin-1 (NICN1) (Homo sapiens (Human)).